Consider the following 173-residue polypeptide: RTX-III toxin-activating lysine-acyltransferase ApxIIC (173 aa).

Catalysis depends on residues His-29 and Asp-98.

Belongs to the RTX toxin acyltransferase family. In terms of assembly, homodimer.

It localises to the cytoplasm. It carries out the reaction a fatty acyl-[ACP] + L-lysyl-[protein] = N(6)-(fatty acyl)-L-lysyl-[protein] + holo-[ACP] + H(+). Protein-lysine acyltransferase that catalyzes fatty acylation of the protoxin, thereby converting it to the active toxin. The protein is RTX-III toxin-activating lysine-acyltransferase ApxIIC (apxIIIC) of Actinobacillus pleuropneumoniae (Haemophilus pleuropneumoniae).